A 172-amino-acid chain; its full sequence is C-phycocyanin-2 beta subunit (172 aa).

An N4-methylasparagine modification is found at N72. 2 residues coordinate (2R,3E)-phycocyanobilin: C82 and C153.

It belongs to the phycobiliprotein family. In terms of assembly, heterodimer of an alpha and a beta subunit, which further assembles into trimers and the trimers into hexamers. Contains two covalently linked bilin chromophores.

The protein localises to the cellular thylakoid membrane. In terms of biological role, light-harvesting photosynthetic bile pigment-protein from the phycobiliprotein complex (phycobilisome, PBS). Phycocyanin is the major phycobiliprotein in the PBS rod. The polypeptide is C-phycocyanin-2 beta subunit (cpcB2) (Pseudanabaena tenuis (strain PCC 7409)).